The chain runs to 400 residues: Argininosuccinate synthase (400 aa).

Residue 9–17 (AYSGGLDTS) participates in ATP binding. Residue Y87 coordinates L-citrulline. Residue G117 participates in ATP binding. The L-aspartate site is built by T119, N123, and D124. N123 contributes to the L-citrulline binding site. Positions 127, 176, 185, 261, and 273 each coordinate L-citrulline.

It belongs to the argininosuccinate synthase family. Type 1 subfamily. In terms of assembly, homotetramer.

It is found in the cytoplasm. The enzyme catalyses L-citrulline + L-aspartate + ATP = 2-(N(omega)-L-arginino)succinate + AMP + diphosphate + H(+). It functions in the pathway amino-acid biosynthesis; L-arginine biosynthesis; L-arginine from L-ornithine and carbamoyl phosphate: step 2/3. The protein is Argininosuccinate synthase of Chlorobium phaeobacteroides (strain DSM 266 / SMG 266 / 2430).